The primary structure comprises 287 residues: NH(3)-dependent NAD(+) synthetase (287 aa).

Position 53–60 (53–60 (GISGGQDS)) interacts with ATP. Aspartate 59 lines the Mg(2+) pocket. Arginine 146 is a binding site for deamido-NAD(+). Position 166 (threonine 166) interacts with ATP. Position 171 (glutamate 171) interacts with Mg(2+). 2 residues coordinate deamido-NAD(+): lysine 179 and aspartate 186. Residues lysine 195 and threonine 217 each contribute to the ATP site. A deamido-NAD(+)-binding site is contributed by 266–267 (HK).

The protein belongs to the NAD synthetase family. Homodimer.

The catalysed reaction is deamido-NAD(+) + NH4(+) + ATP = AMP + diphosphate + NAD(+) + H(+). It participates in cofactor biosynthesis; NAD(+) biosynthesis; NAD(+) from deamido-NAD(+) (ammonia route): step 1/1. Catalyzes the ATP-dependent amidation of deamido-NAD to form NAD. Uses ammonia as a nitrogen source. This Deinococcus radiodurans (strain ATCC 13939 / DSM 20539 / JCM 16871 / CCUG 27074 / LMG 4051 / NBRC 15346 / NCIMB 9279 / VKM B-1422 / R1) protein is NH(3)-dependent NAD(+) synthetase.